The following is a 151-amino-acid chain: Acidic phospholipase A2 3 (151 aa).

Residues 1–27 (MYPAHLLVLLAVCVSLLGAASIPARPL) form the signal peptide. 7 disulfide bridges follow: Cys38–Cys104, Cys54–Cys151, Cys56–Cys72, Cys71–Cys132, Cys78–Cys125, Cys88–Cys118, and Cys111–Cys123. The Ca(2+) site is built by Tyr55, Gly57, and Gly59. His75 is a catalytic residue. Asp76 is a Ca(2+) binding site. Residue Asp126 is part of the active site.

The protein belongs to the phospholipase A2 family. Group I subfamily. D49 sub-subfamily. The cofactor is Ca(2+). Expressed by the venom gland.

The protein resides in the secreted. It catalyses the reaction a 1,2-diacyl-sn-glycero-3-phosphocholine + H2O = a 1-acyl-sn-glycero-3-phosphocholine + a fatty acid + H(+). PLA2 catalyzes the calcium-dependent hydrolysis of the 2-acyl groups in 3-sn-phosphoglycerides. The protein is Acidic phospholipase A2 3 of Tropidechis carinatus (Australian rough-scaled snake).